Consider the following 329-residue polypeptide: Probable carboxylesterase 8 (329 aa).

The Involved in the stabilization of the negatively charged intermediate by the formation of the oxyanion hole signature appears at 73 to 75; sequence HGG. Residues S161, D264, and H294 contribute to the active site.

Belongs to the 'GDXG' lipolytic enzyme family. As to expression, expressed in leaves, stems, flowers and siliques.

The enzyme catalyses a carboxylic ester + H2O = an alcohol + a carboxylate + H(+). Carboxylesterase acting on esters with varying acyl chain length. The protein is Probable carboxylesterase 8 (CXE8) of Arabidopsis thaliana (Mouse-ear cress).